Here is a 183-residue protein sequence, read N- to C-terminus: Cuticle protein 2 (183 aa).

The signal sequence occupies residues 1 to 15; that stretch reads MKLIVVAALIGVCAG. Positions 58–121 constitute a Chitin-binding type R&amp;R domain; that stretch reads SQGFQYVYDT…AQGAHLPTPP (64 aa).

The chain is Cuticle protein 2 from Lonomia obliqua (Moth).